Here is a 923-residue protein sequence, read N- to C-terminus: Protocadherin gamma-B5 (923 aa).

Positions 1–30 (MGRGTGELGRAERLPVLFLFLLSLFCPALC) are cleaved as a signal peptide. 6 consecutive Cadherin domains span residues 31-133 (EQIR…TPKF), 134-242 (TQNS…PPVF), 243-343 (NRDV…SPEV), 344-448 (TFHS…APVF), 449-558 (HQAS…APRV), and 566-671 (DGSA…LPDI). The Extracellular segment spans residues 31 to 687 (EQIRYRIPEE…SDPQAELQFY (657 aa)). 2 N-linked (GlcNAc...) asparagine glycosylation sites follow: Asn415 and Asn541. A helical membrane pass occupies residues 688–708 (LVVALALISVLFLLAVILAIA). The Cytoplasmic portion of the chain corresponds to 709–923 (LRLRRSSSPA…KKKSGKKEKK (215 aa)). Disordered stretches follow at residues 794-832 (TSHP…WPNN) and 893-923 (ATLT…KEKK). Residues 807-832 (WRFSQAQRPGTSGSQNGDDTGTWPNN) show a composition bias toward polar residues. The segment covering 913–923 (NKKKSGKKEKK) has biased composition (basic residues).

The protein localises to the cell membrane. Its function is as follows. Potential calcium-dependent cell-adhesion protein. May be involved in the establishment and maintenance of specific neuronal connections in the brain. In Pan troglodytes (Chimpanzee), this protein is Protocadherin gamma-B5 (PCDHGB5).